The following is a 362-amino-acid chain: Outer mitochondrial transmembrane helix translocase (362 aa).

Residues 1–19 (MVLKEIPTENITRPLGRNE) are Mitochondrial intermembrane-facing. The helical transmembrane segment at 20-42 (VIGLLFRLTIFGAVTYFTIKWMV) threads the bilayer. At 43–362 (DAIDPTRKQK…HEAFMQVPLD (320 aa)) the chain is on the cytoplasmic side. Position 137–144 (137–144 (GPPGCGKT)) interacts with ATP.

Belongs to the AAA ATPase family. MSP1 subfamily.

It localises to the mitochondrion outer membrane. The protein resides in the peroxisome membrane. Its subcellular location is the postsynaptic cell membrane. It catalyses the reaction [protein]-with a C-terminal TM segment(out) + ATP + H2O = [protein]-with a C-terminal TM segment(in) + ADP + phosphate + H(+). Functionally, outer mitochondrial translocase required to remove mislocalized tail-anchored transmembrane proteins on mitochondria. Specifically recognizes and binds tail-anchored transmembrane proteins: acts as a dislocase that mediates the ATP-dependent extraction of mistargeted tail-anchored transmembrane proteins from the mitochondrion outer membrane. Also plays a critical role in regulating the surface expression of AMPA receptors (AMPAR), thereby regulating synaptic plasticity and learning and memory. The polypeptide is Outer mitochondrial transmembrane helix translocase (Danio rerio (Zebrafish)).